A 248-amino-acid chain; its full sequence is mRNA-decapping protein OPG122 (248 aa).

The Nudix hydrolase domain maps to 45 to 227 (HKRVSVSAIL…IAKYALDTAK (183 aa)). The short motif at 125-147 (GGIPKRGENVPECLSREIKEEVN) is the Nudix box element.

This sequence belongs to the Nudix hydrolase family. Interacts with the late transcription elongation factor VLTF-4/OPG110. Interacts with the late transcription factors VLTF-1. Requires Mg(2+) as cofactor. It depends on Mn(2+) as a cofactor.

Its subcellular location is the host mitochondrion. Acts with RNA polymerase to initiate transcription from late gene promoters. This is mRNA-decapping protein OPG122 (OPG122) from Cynomys gunnisoni (Gunnison's prairie dog).